Reading from the N-terminus, the 578-residue chain is A-type ATP synthase subunit A (578 aa).

ATP is bound at residue 228 to 235; the sequence is GPFGSGKT.

Belongs to the ATPase alpha/beta chains family. As to quaternary structure, has multiple subunits with at least A(3), B(3), C, D, E, F, G, I and proteolipid K(x).

The protein resides in the cell membrane. It catalyses the reaction ATP + H2O + 4 H(+)(in) = ADP + phosphate + 5 H(+)(out). Its activity is regulated as follows. ATP hydrolysis stimulated by sulfite, ethanol, glycerol, magnesium and zinc ions, inhibited by diethylstilbestrol (DES) and less well by N,N-dicyclohexylcarbodiimide (DCCD). Functionally, component of the A-type ATP synthase that produces ATP from ADP in the presence of a proton gradient across the membrane. The A chain is the catalytic subunit. The chain is A-type ATP synthase subunit A from Methanosarcina mazei (strain ATCC BAA-159 / DSM 3647 / Goe1 / Go1 / JCM 11833 / OCM 88) (Methanosarcina frisia).